A 338-amino-acid polypeptide reads, in one-letter code: uncharacterized protein (338 aa).

This sequence belongs to the MG032/MG096/MG288 family.

This is an uncharacterized protein from Mycoplasma pneumoniae (strain ATCC 29342 / M129 / Subtype 1) (Mycoplasmoides pneumoniae).